The primary structure comprises 230 residues: Urease accessory protein UreF (230 aa).

The protein belongs to the UreF family. In terms of assembly, ureD, UreF and UreG form a complex that acts as a GTP-hydrolysis-dependent molecular chaperone, activating the urease apoprotein by helping to assemble the nickel containing metallocenter of UreC. The UreE protein probably delivers the nickel.

The protein localises to the cytoplasm. Its function is as follows. Required for maturation of urease via the functional incorporation of the urease nickel metallocenter. The sequence is that of Urease accessory protein UreF from Polynucleobacter asymbioticus (strain DSM 18221 / CIP 109841 / QLW-P1DMWA-1) (Polynucleobacter necessarius subsp. asymbioticus).